Consider the following 463-residue polypeptide: L-seryl-tRNA(Sec) selenium transferase (463 aa).

An N6-(pyridoxal phosphate)lysine modification is found at Lys295.

This sequence belongs to the SelA family. Homodecamer; pentamer of dimers. Binds only one seryl-tRNA(Sec) per dimer. The cofactor is pyridoxal 5'-phosphate.

The protein resides in the cytoplasm. The catalysed reaction is L-seryl-tRNA(Sec) + selenophosphate + H(+) = L-selenocysteinyl-tRNA(Sec) + phosphate. The protein operates within aminoacyl-tRNA biosynthesis; selenocysteinyl-tRNA(Sec) biosynthesis; selenocysteinyl-tRNA(Sec) from L-seryl-tRNA(Sec) (bacterial route): step 1/1. Functionally, converts seryl-tRNA(Sec) to selenocysteinyl-tRNA(Sec) required for selenoprotein biosynthesis. In Shigella boydii serotype 4 (strain Sb227), this protein is L-seryl-tRNA(Sec) selenium transferase.